We begin with the raw amino-acid sequence, 316 residues long: Methionyl-tRNA formyltransferase (316 aa).

A (6S)-5,6,7,8-tetrahydrofolate-binding site is contributed by G111–P114.

The protein belongs to the Fmt family.

The catalysed reaction is L-methionyl-tRNA(fMet) + (6R)-10-formyltetrahydrofolate = N-formyl-L-methionyl-tRNA(fMet) + (6S)-5,6,7,8-tetrahydrofolate + H(+). Functionally, attaches a formyl group to the free amino group of methionyl-tRNA(fMet). The formyl group appears to play a dual role in the initiator identity of N-formylmethionyl-tRNA by promoting its recognition by IF2 and preventing the misappropriation of this tRNA by the elongation apparatus. The polypeptide is Methionyl-tRNA formyltransferase (Chlamydia trachomatis serovar L2b (strain UCH-1/proctitis)).